A 1145-amino-acid polypeptide reads, in one-letter code: Cellulose synthase-like protein D3 (1145 aa).

Polar residues predominate over residues Met1–Asp19. 2 disordered regions span residues Met1 to Arg38 and Asp189 to Asp208. Transmembrane regions (helical) follow at residues Val289 to Met309 and Ala319 to Leu339. The active site involves Asp419. A Phosphoserine modification is found at Ser755. Asp848 is an active-site residue. A run of 6 helical transmembrane segments spans residues Phe930–Val950, Thr956–Ile976, Leu1002–Leu1022, Ser1045–Phe1065, Leu1079–Gly1099, and Thr1109–Ile1129.

Belongs to the glycosyltransferase 2 family. Plant cellulose synthase-like D subfamily. Preferentially expressed in root hair cells. Expressed in roots, leaves, stems, flowers and siliques.

Its subcellular location is the golgi apparatus membrane. Functionally, thought to be a Golgi-localized beta-glycan synthase that polymerize the backbones of noncellulosic polysaccharides (hemicelluloses) of plant cell wall. Required for synthesis of a cell wall polysaccharide essential for root hair elongation, but not initiation. May be the functional ortholog of rice CSLD1. This is Cellulose synthase-like protein D3 (CSLD3) from Arabidopsis thaliana (Mouse-ear cress).